Reading from the N-terminus, the 466-residue chain is Voltage-gated potassium channel regulatory subunit KCNG2 (466 aa).

Residues 1–174 lie on the Cytoplasmic side of the membrane; sequence MEPWPCSPGG…DVVDNPHSGL (174 aa). The disordered stretch occupies residues 131-155; the sequence is AEARAGPTERGAQGSPARALGPRGR. A helical transmembrane segment spans residues 175–196; it reads AGKLFACVSVSFVAVTAVGLCL. Topologically, residues 197–217 are extracellular; it reads STMPDIRAEEERGECSPKCRS. Residues 218-239 traverse the membrane as a helical segment; the sequence is LFVLETVCVAWFSFEFLLRSLQ. Over 240-250 the chain is Cytoplasmic; that stretch reads AESKCAFLRAP. A helical transmembrane segment spans residues 251 to 271; it reads LNIIDILALLPFYVSLLLGLA. The Extracellular portion of the chain corresponds to 272–283; that stretch reads AGPGGTKLLERA. A helical; Voltage-sensor transmembrane segment spans residues 284–304; it reads GLVLRLLRALRVLYVMRLARH. Topologically, residues 305-319 are cytoplasmic; that stretch reads SLGLRSLGLTMRRCA. A helical membrane pass occupies residues 320-341; the sequence is REFGLLLLFLCVAMALFAPLVH. At 342 to 356 the chain is on the extracellular side; it reads LAERELGARRDFSSV. Residues 357–368 constitute an intramembrane region (helical); it reads PASYWWAVISMT. The Selectivity filter motif lies at 369-374; the sequence is TVGYGD. An intramembrane segment occupies 369–376; the sequence is TVGYGDMV. At 377-383 the chain is on the extracellular side; that stretch reads PRSLPGQ. The chain crosses the membrane as a helical span at residues 384 to 412; that stretch reads VVALSSILSGILLMAFPVTSIFHTFSRSY. The Cytoplasmic segment spans residues 413–466; that stretch reads SELKEQQQRAASPEPALQEDSTHSATATEDSSQGPDSAGLADDSADALWVRAGR. The interval 416–466 is disordered; sequence KEQQQRAASPEPALQEDSTHSATATEDSSQGPDSAGLADDSADALWVRAGR. The span at 435–447 shows a compositional bias: polar residues; that stretch reads HSATATEDSSQGP. A compositionally biased stretch (low complexity) spans 448–460; the sequence is DSAGLADDSADAL.

The protein belongs to the potassium channel family. G (TC 1.A.1.2) subfamily. Kv6.2/KCNG2 sub-subfamily. Heterodimer with KCNB1. Highly expressed in heart, liver, skeletal muscle, kidney and pancreas. Detected at low levels in brain, lung and placenta.

The protein localises to the cell membrane. Its function is as follows. Regulatory alpha-subunit of the voltage-gated potassium (Kv) channel which, when coassembled with KCNB1, can modulate the kinetics and conductance-voltage relationship. Modulates channel activity by shifting the threshold and the half-maximal activation to more negative values. Potassium channel subunit that does not form functional channels by itself. This chain is Voltage-gated potassium channel regulatory subunit KCNG2, found in Homo sapiens (Human).